Consider the following 1077-residue polypeptide: Teashirt homolog 1-B (1077 aa).

Disordered regions lie at residues 1 to 110 (MPRR…NASY) and 142 to 179 (NEKASPTTNTDKSSKSEASGPTSDPGTPTTITSSSCTN). Positions 26–36 (TEEDNLEDDGL) are enriched in acidic residues. The span at 56 to 69 (TQSYQNSPISSATN) shows a compositional bias: polar residues. A compositionally biased stretch (low complexity) spans 160–179 (SGPTSDPGTPTTITSSSCTN). The C2H2-type 1 zinc-finger motif lies at 248–272 (FRCKDCSAAYDTLVELTVHMNETGH). The span at 274–286 (RDDNRDREAERTK) shows a compositional bias: basic and acidic residues. The interval 274–300 (RDDNRDREAERTKRWSKPRKRSLMEME) is disordered. Residues 309–333 (LKCMYCGHSFESLQDLSVHMIKTKH) form a C2H2-type 2 zinc finger. The tract at residues 362–394 (ALPDSPEQAGISPGASVSESAKDPKAANPYVTP) is disordered. Residues 418–442 (LKCMECGSSHDTLQQLTAHMMVTGH) form a C2H2-type 3 zinc finger. Disordered stretches follow at residues 473–530 (PPTT…KIEP) and 849–873 (GRLTPKSSTPSTVSEKSDADGSSFE). Residues 497-529 (HSEEKKDPEKEKVNIGEVEKKIKEENEDPEKIE) are compositionally biased toward basic and acidic residues. A compositionally biased stretch (polar residues) spans 853–862 (PKSSTPSTVS). Positions 885–955 (RKGRQSNWNP…NVKYQLRRTG (71 aa)) form a DNA-binding region, homeobox. 2 consecutive C2H2-type zinc fingers follow at residues 970–992 (FFCNDCASQFRTASTYIGHLETH) and 1037–1060 (FQCKLCNRTFASKHAVKLHLSKTH).

This sequence belongs to the teashirt C2H2-type zinc-finger protein family.

The protein localises to the nucleus. Its function is as follows. Probable transcriptional regulator involved in developmental processes. May act as a transcriptional repressor (Potential). Involved in two major neuronal regionalization processes: primary anteroposterior (AP) axis patterning of the CNS and segmentation of the cranial neuronal crest (CNS) development. This Xenopus laevis (African clawed frog) protein is Teashirt homolog 1-B (tshz1-b).